The primary structure comprises 176 residues: Large ribosomal subunit protein uL6 (176 aa).

The segment covering 151–170 (RPPEPYKGKGVRYADEQVRR) has biased composition (basic and acidic residues). The tract at residues 151-176 (RPPEPYKGKGVRYADEQVRRKEAKKK) is disordered.

The protein belongs to the universal ribosomal protein uL6 family. In terms of assembly, part of the 50S ribosomal subunit.

In terms of biological role, this protein binds to the 23S rRNA, and is important in its secondary structure. It is located near the subunit interface in the base of the L7/L12 stalk, and near the tRNA binding site of the peptidyltransferase center. The sequence is that of Large ribosomal subunit protein uL6 from Shewanella pealeana (strain ATCC 700345 / ANG-SQ1).